Consider the following 292-residue polypeptide: Malonyl-[acyl-carrier protein] O-methyltransferase (292 aa).

Belongs to the methyltransferase superfamily.

It carries out the reaction malonyl-[ACP] + S-adenosyl-L-methionine = malonyl-[ACP] methyl ester + S-adenosyl-L-homocysteine. Its pathway is cofactor biosynthesis; biotin biosynthesis. Functionally, converts the free carboxyl group of a malonyl-thioester to its methyl ester by transfer of a methyl group from S-adenosyl-L-methionine (SAM). It allows to synthesize pimeloyl-ACP via the fatty acid synthetic pathway. The sequence is that of Malonyl-[acyl-carrier protein] O-methyltransferase from Alcanivorax borkumensis (strain ATCC 700651 / DSM 11573 / NCIMB 13689 / SK2).